The following is a 336-amino-acid chain: F420-dependent glucose-6-phosphate dehydrogenase (336 aa).

Asp-39 lines the coenzyme F420-(gamma-Glu)n pocket. The active-site Proton donor is His-40. Coenzyme F420-(gamma-Glu)n contacts are provided by residues Thr-76 and 107–108 (TG). The active-site Proton acceptor is the Glu-109. Coenzyme F420-(gamma-Glu)n is bound by residues Asn-112, 177 to 178 (GG), and 180 to 181 (AV). Substrate-binding residues include Thr-195, Lys-198, Lys-259, and Arg-283.

It belongs to the F420-dependent glucose-6-phosphate dehydrogenase family. Homodimer.

The catalysed reaction is oxidized coenzyme F420-(gamma-L-Glu)(n) + D-glucose 6-phosphate + H(+) = 6-phospho-D-glucono-1,5-lactone + reduced coenzyme F420-(gamma-L-Glu)(n). Its function is as follows. Catalyzes the coenzyme F420-dependent oxidation of glucose 6-phosphate (G6P) to 6-phosphogluconolactone. Appears to have a role in resistance to oxidative stress, via its consumption of G6P that serves as a source of reducing power to combat oxidative stress in mycobacteria. More precisely, is likely involved in a F420-dependent anti-oxidant mechanism that protects M.tuberculosis against oxidative stress and bactericidal agents. Functionally, is essential for the bioreductive activation of the bicyclic 4-nitroimidazole prodrug PA-824 (nitroimidazo-oxazine) developed for anti-tuberculosis therapy against both replicating and persistent bacteria. It does not interact directly with PA-824 but, rather, provides reduced F420 to the deazaflavin-dependent nitroreductase Ddn, which in turn activates PA-824. This chain is F420-dependent glucose-6-phosphate dehydrogenase (fgd1), found in Mycobacterium tuberculosis (strain CDC 1551 / Oshkosh).